We begin with the raw amino-acid sequence, 399 residues long: uncharacterized protein (399 aa).

The next 9 helical transmembrane spans lie at 46–66 (IAPY…FFIV), 76–95 (TLPR…YQTM), 139–159 (GVGY…FWMA), 181–201 (IIII…FWTF), 226–246 (LMLN…TCFF), 262–282 (ILPA…SFIW), 303–323 (VQFS…LAHM), 330–350 (IIQA…INYF), and 352–372 (GTII…SFVH).

It belongs to the CDP-alcohol phosphatidyltransferase class-I family.

It localises to the membrane. This is an uncharacterized protein from Dictyostelium discoideum (Social amoeba).